The sequence spans 898 residues: Transportin-1 (898 aa).

Met-1 is modified (N-acetylmethionine). HEAT repeat units follow at residues Gly-19–Glu-46, Tyr-51–Gln-89, Phe-98–Leu-131, Leu-137–Asp-174, Asn-181–Ile-211, Phe-224–Leu-251, His-263–Thr-290, Pro-306–Val-397, His-405–Ala-433, Pro-445–Arg-472, Leu-486–Ala-519, Leu-527–Val-560, Glu-568–Gln-606, Glu-614–Gly-665, Ile-676–Phe-707, Ala-715–Gly-748, Pro-756–Pro-791, Gln-799–Asn-832, Ile-841–Val-872, and Glu-875–Phe-895. The region spanning Val-41–Asp-109 is the Importin N-terminal domain. The segment at Phe-347–Asp-374 is disordered. A compositionally biased stretch (acidic residues) spans Asp-360–Asp-374.

It belongs to the importin beta family. Importin beta-2 subfamily. As to quaternary structure, identified in a complex that contains TNPO1, RAN and RANBP1. Binds HNRPA1, HNRPA2, HNRNPDL, RPS7, RPL5 and RAN. Interacts with H2A, H2B, H3 and H4 histones. Interacts with isoform 1 and isoform 5 of ADAR/ADAR1 (via DRBM 3 domain). Interacts with SNAI1 (via zinc fingers); the interaction mediates SNAI1 nuclear import. Interacts with SNAI2 (via zinc fingers). Interacts with RPL23A (via BIB domain) and SRP19; this interaction is involved in RPL23A and SRP19 import into the nucleus. Interacts (via HEAT repeats 8-12) with BAP1 (via non-classical PY-NLS); this interaction is direct, is involved in BAP1 nuclear import and disrupts BAP1 homodimerization. (Microbial infection) Binds to HIV-1 Rev.

It localises to the cytoplasm. The protein localises to the nucleus. Its function is as follows. Functions in nuclear protein import as nuclear transport receptor. Serves as receptor for nuclear localization signals (NLS) in cargo substrates. May mediate docking of the importin/substrate complex to the nuclear pore complex (NPC) through binding to nucleoporin and the complex is subsequently translocated through the pore by an energy requiring, Ran-dependent mechanism. At the nucleoplasmic side of the NPC, Ran binds to the importin, the importin/substrate complex dissociates and importin is re-exported from the nucleus to the cytoplasm where GTP hydrolysis releases Ran. The directionality of nuclear import is thought to be conferred by an asymmetric distribution of the GTP- and GDP-bound forms of Ran between the cytoplasm and nucleus. Involved in nuclear import of M9-containing proteins. In vitro, binds directly to the M9 region of the heterogeneous nuclear ribonucleoproteins (hnRNP), A1 and A2 and mediates their nuclear import. Involved in hnRNP A1/A2 nuclear export. Mediates the nuclear import of ribosomal proteins RPL23A, RPS7 and RPL5. In vitro, mediates nuclear import of H2A, H2B, H3 and H4 histones. In vitro, mediates nuclear import of SRP19. Mediates nuclear import of ADAR/ADAR1 isoform 1 and isoform 5 in a RanGTP-dependent manner. Main mediator of PR-DUB complex component BAP1 nuclear import; acts redundantly with the karyopherins KPNA1 and KPNA2. Functionally, (Microbial infection) In case of HIV-1 infection, binds and mediates the nuclear import of HIV-1 Rev. This is Transportin-1 (TNPO1) from Homo sapiens (Human).